The primary structure comprises 350 residues: Putative [LysW]-lysine/[LysW]-ornithine hydrolase (350 aa).

Residue His72 participates in Zn(2+) binding. The active site involves Asp74. Zn(2+) is bound at residue Asp96. Glu128 serves as the catalytic Proton acceptor. Zn(2+)-binding residues include Glu129, Glu152, and His321.

It belongs to the peptidase M20A family. LysK subfamily. It depends on Zn(2+) as a cofactor. Requires Co(2+) as cofactor.

Its subcellular location is the cytoplasm. The enzyme catalyses [amino-group carrier protein]-C-terminal-gamma-(L-lysyl)-L-glutamate + H2O = [amino-group carrier protein]-C-terminal-L-glutamate + L-lysine. The catalysed reaction is [amino-group carrier protein]-C-terminal-gamma-(L-ornithyl)-L-glutamate + H2O = [amino-group carrier protein]-C-terminal-L-glutamate + L-ornithine. The protein operates within amino-acid biosynthesis; L-lysine biosynthesis via AAA pathway; L-lysine from L-alpha-aminoadipate (Thermus route): step 5/5. Its pathway is amino-acid biosynthesis; L-arginine biosynthesis. Its function is as follows. Catalyzes the release of L-lysine from [LysW]-gamma-L-lysine and the release of L-ornithine from [LysW]-L-ornithine. The chain is Putative [LysW]-lysine/[LysW]-ornithine hydrolase from Aeropyrum pernix (strain ATCC 700893 / DSM 11879 / JCM 9820 / NBRC 100138 / K1).